A 101-amino-acid chain; its full sequence is Trp operon repressor homolog (101 aa).

The DNA-binding element occupies 59 to 82; the sequence is QREIAQKYGVSIAQITRGSNALKA.

Belongs to the TrpR family. As to quaternary structure, homodimer.

Its subcellular location is the cytoplasm. Functionally, this protein is an aporepressor. When complexed with L-tryptophan it binds the operator region of the trp operon and prevents the initiation of transcription. The sequence is that of Trp operon repressor homolog from Chlamydia caviae (strain ATCC VR-813 / DSM 19441 / 03DC25 / GPIC) (Chlamydophila caviae).